The sequence spans 322 residues: Glutamyl-Q tRNA(Asp) synthetase (322 aa).

Residues 28-32 (RFAPS) and glutamate 64 contribute to the L-glutamate site. The 'HIGH' region signature appears at 31–41 (PSPSGDLHFGS). Positions 120, 122, 134, and 138 each coordinate Zn(2+). L-glutamate is bound by residues tyrosine 191 and arginine 209. A 'KMSKS' region motif is present at residues 247-251 (KLSKQ). Residue lysine 250 coordinates ATP.

The protein belongs to the class-I aminoacyl-tRNA synthetase family. GluQ subfamily. The cofactor is Zn(2+).

Catalyzes the tRNA-independent activation of glutamate in presence of ATP and the subsequent transfer of glutamate onto a tRNA(Asp). Glutamate is transferred on the 2-amino-5-(4,5-dihydroxy-2-cyclopenten-1-yl) moiety of the queuosine in the wobble position of the QUC anticodon. The polypeptide is Glutamyl-Q tRNA(Asp) synthetase (Pectobacterium atrosepticum (strain SCRI 1043 / ATCC BAA-672) (Erwinia carotovora subsp. atroseptica)).